A 164-amino-acid polypeptide reads, in one-letter code: Phosphohistidine phosphatase SixA homolog (164 aa).

This sequence belongs to the SixA phosphatase family.

This Haemophilus influenzae (strain ATCC 51907 / DSM 11121 / KW20 / Rd) protein is Phosphohistidine phosphatase SixA homolog (sixA-A).